A 542-amino-acid polypeptide reads, in one-letter code: Chaperonin GroEL 2 (542 aa).

ATP-binding positions include 30 to 33, K51, 87 to 91, G415, and D496; these read TLGP and DGTTT.

The protein belongs to the chaperonin (HSP60) family. In terms of assembly, forms a cylinder of 14 subunits composed of two heptameric rings stacked back-to-back. Interacts with the co-chaperonin GroES.

Its subcellular location is the cytoplasm. It catalyses the reaction ATP + H2O + a folded polypeptide = ADP + phosphate + an unfolded polypeptide.. Functionally, together with its co-chaperonin GroES, plays an essential role in assisting protein folding. The GroEL-GroES system forms a nano-cage that allows encapsulation of the non-native substrate proteins and provides a physical environment optimized to promote and accelerate protein folding. This Cereibacter sphaeroides (strain ATCC 17023 / DSM 158 / JCM 6121 / CCUG 31486 / LMG 2827 / NBRC 12203 / NCIMB 8253 / ATH 2.4.1.) (Rhodobacter sphaeroides) protein is Chaperonin GroEL 2.